Consider the following 122-residue polypeptide: Large ribosomal subunit protein uL14 (122 aa).

This sequence belongs to the universal ribosomal protein uL14 family. Part of the 50S ribosomal subunit. Forms a cluster with proteins L3 and L19. In the 70S ribosome, L14 and L19 interact and together make contacts with the 16S rRNA in bridges B5 and B8.

Binds to 23S rRNA. Forms part of two intersubunit bridges in the 70S ribosome. The polypeptide is Large ribosomal subunit protein uL14 (Geobacter sulfurreducens (strain ATCC 51573 / DSM 12127 / PCA)).